The chain runs to 952 residues: Respiratory burst oxidase homolog protein E (952 aa).

Residues 1 to 392 lie on the Cytoplasmic side of the membrane; that stretch reads MKLSPLSFST…QCLILDNWQR (392 aa). EF-hand-like regions lie at residues 211–219 and 245–256; these read SKNGLLARD and RRQKLEKITKDE. EF-hand domains are found at residues 268 to 303 and 312 to 347; these read SFDARLQIFFDMADSNEDGKITREEIKELLMLSASA and QAEEYASLIMEELDPENFGYIELWQLETLLLQRDAY. Asp281, Asn283, Asp285, Lys287, and Glu292 together coordinate Ca(2+). A helical transmembrane segment spans residues 393–413; that stretch reads SWVLLVWVMLMAILFVWKFLE. The Extracellular portion of the chain corresponds to 414–475; the sequence is YREKAAFKVM…PFDDNINFHK (62 aa). The Ferric oxidoreductase domain maps to 431–587; it reads KGAAETLKLN…LLVVVYIMLI (157 aa). A helical transmembrane segment spans residues 476–496; the sequence is IIACAIAIGILVHAGTHLACD. Residues 497-531 lie on the Cytoplasmic side of the membrane; that stretch reads FPRIINSSPEQFVLIASAFNGTKPTFKDLMTGAEG. The helical transmembrane segment at 532-552 threads the bilayer; the sequence is ITGISMVILTTIAFTLASTHF. The Extracellular segment spans residues 553–574; it reads RRNRVRLPAPLDRLTGFNAFWY. A helical membrane pass occupies residues 575–595; sequence THHLLVVVYIMLIVHGTFLFF. Residues 596 to 603 are Cytoplasmic-facing; it reads ADKWYQKT. The helical transmembrane segment at 604 to 621 threads the bilayer; that stretch reads TWMYISVPLVLYVAERSL. The Extracellular portion of the chain corresponds to 622 to 750; that stretch reads RACRSKHYSV…PYGAPAQDYR (129 aa). An FAD-binding FR-type domain is found at 626-748; sequence SKHYSVKILK…DGPYGAPAQD (123 aa). A helical membrane pass occupies residues 751–771; sequence SYDVLLLIGLGIGATPFISIL. At 772–952 the chain is on the cytoplasmic side; the sequence is KDLLNNSRDE…TRFEFHKEHF (181 aa).

It belongs to the RBOH (TC 5.B.1.3) family. In terms of assembly, monomer and homodimer. Expressed in roots, inflorescences, leaves and stems.

It localises to the membrane. Calcium-dependent NADPH oxidase that generates superoxide. The protein is Respiratory burst oxidase homolog protein E (RBOHE) of Arabidopsis thaliana (Mouse-ear cress).